Here is a 355-residue protein sequence, read N- to C-terminus: U5 small nuclear ribonucleoprotein 40 kDa protein (355 aa).

WD repeat units follow at residues Gly-60–Ser-99, Gly-103–Arg-142, Glu-145–Leu-185, Gln-187–Tyr-226, Ser-230–Arg-269, Asn-280–Cys-319, and Gly-322–Pro-355.

In terms of assembly, component of the pre-catalytic and catalytic spliceosome complexes. Component of the postcatalytic spliceosome P complex. Part of the U5 snRNP complex. Component of the U4/U6-U5 tri-snRNP complex.

It localises to the nucleus. In terms of biological role, required for pre-mRNA splicing as component of the activated spliceosome. Component of the U5 small nuclear ribonucleoprotein (snRNP) complex and the U4/U6-U5 tri-snRNP complex, building blocks of the spliceosome. In Dictyostelium discoideum (Social amoeba), this protein is U5 small nuclear ribonucleoprotein 40 kDa protein (snrnp40).